A 247-amino-acid chain; its full sequence is MQPILLLLAFLLLPRADAGEIIGGHEAKPHSRPYMAYLMIWDQKSLKRCGGFLIRDDFVLTAAHCWGSSINVTLGAHNIKEQEPTQQFIPVKRPIPHPAYNPKNFSNDIMLLQLERKAKRTRAVQPLRLPSNKAQVKPGQTCSVAGWGQTAPLGKHSHTLQEVKMTVQEDRKCESDLRHYYDSTIELCVGDPEIKKTSFKGDSGGPLVCNKVAQGIVSYGRNNGMPPRACTKVSSFVHWIKKTMKRY.

A signal peptide spans 1–18 (MQPILLLLAFLLLPRADA). The propeptide at 19–20 (GE) is activation peptide. Residues 21 to 245 (IIGGHEAKPH…FVHWIKKTMK (225 aa)) enclose the Peptidase S1 domain. Cysteines 49 and 65 form a disulfide. The Charge relay system role is filled by H64. N71 and N104 each carry an N-linked (GlcNAc...) asparagine glycan. Catalysis depends on D108, which acts as the Charge relay system. 2 cysteine pairs are disulfide-bonded: C142/C209 and C173/C188. Residue S203 is the Charge relay system of the active site.

It belongs to the peptidase S1 family. Granzyme subfamily.

The protein localises to the secreted. Its subcellular location is the cytolytic granule. The enzyme catalyses Preferential cleavage: -Asp-|-Xaa- &gt;&gt; -Asn-|-Xaa- &gt; -Met-|-Xaa-, -Ser-|-Xaa-.. Its activity is regulated as follows. Inactivated by the serine protease inhibitor diisopropylfluorophosphate. In terms of biological role, abundant protease in the cytosolic granules of cytotoxic T-cells and NK-cells which activates caspase-independent pyroptosis when delivered into the target cell through the immunological synapse. It cleaves after Asp. Once delivered into the target cell, acts by catalyzing cleavage of gasdermin-E (GSDME), releasing the pore-forming moiety of GSDME, thereby triggering pyroptosis and target cell death. Seems to be linked to an activation cascade of caspases (aspartate-specific cysteine proteases) responsible for apoptosis execution. Cleaves caspase-3, -9 and -10 (CASP3, CASP9 and CASP10, respectively) to give rise to active enzymes mediating apoptosis. Cleaves and activates CASP7 in response to bacterial infection, promoting plasma membrane repair. The polypeptide is Granzyme B (Homo sapiens (Human)).